The following is an 804-amino-acid chain: Probable protein phosphatase 2C 18 (804 aa).

Residues 19 to 39 traverse the membrane as a helical segment; that stretch reads DASGPVLFWCVLIIFAVPDAI. Residues 129-434 form the PPM-type phosphatase domain; sequence KYIVSSMQGL…ENTTVILVQF (306 aa). The Mn(2+) site is built by D165, G166, Q384, and E425. Disordered stretches follow at residues 460–509, 564–599, 623–653, and 675–804; these read STSA…GGSA, DEVE…LNAS, PLQG…DDDV, and VDST…EGSP. The segment covering 468–499 has biased composition (low complexity); that stretch reads GSDSDTSATSDEGVDDTATAGTTTTGYEAGSS. Polar residues predominate over residues 628-637; it reads DVSSTSTNPN. Over residues 638–647 the composition is skewed to low complexity; the sequence is TATDTGSGSR. Over residues 713 to 734 the composition is skewed to polar residues; that stretch reads LVNNDTTVADNNASGVADSTTV. Over residues 776–789 the composition is skewed to low complexity; that stretch reads DATATATASASAAV. The segment covering 790–804 has biased composition (acidic residues); it reads ADDEGTAPDDSEGSP.

The protein belongs to the PP2C family. The cofactor is Mg(2+). Mn(2+) serves as cofactor.

It localises to the membrane. It carries out the reaction O-phospho-L-seryl-[protein] + H2O = L-seryl-[protein] + phosphate. The catalysed reaction is O-phospho-L-threonyl-[protein] + H2O = L-threonyl-[protein] + phosphate. The protein is Probable protein phosphatase 2C 18 of Oryza sativa subsp. japonica (Rice).